The primary structure comprises 260 residues: Hydroxyethylthiazole kinase (260 aa).

Residue Met38 coordinates substrate. The ATP site is built by Lys114 and Ser161. Gly188 is a substrate binding site.

This sequence belongs to the Thz kinase family. The cofactor is Mg(2+).

It catalyses the reaction 5-(2-hydroxyethyl)-4-methylthiazole + ATP = 4-methyl-5-(2-phosphooxyethyl)-thiazole + ADP + H(+). Its pathway is cofactor biosynthesis; thiamine diphosphate biosynthesis; 4-methyl-5-(2-phosphoethyl)-thiazole from 5-(2-hydroxyethyl)-4-methylthiazole: step 1/1. Its function is as follows. Catalyzes the phosphorylation of the hydroxyl group of 4-methyl-5-beta-hydroxyethylthiazole (THZ). The protein is Hydroxyethylthiazole kinase of Campylobacter lari (strain RM2100 / D67 / ATCC BAA-1060).